A 93-amino-acid polypeptide reads, in one-letter code: Large ribosomal subunit protein uL23cz/uL23cy (93 aa).

It belongs to the universal ribosomal protein uL23 family. In terms of assembly, part of the 50S ribosomal subunit.

The protein localises to the plastid. The protein resides in the chloroplast. Functionally, binds to 23S rRNA. The chain is Large ribosomal subunit protein uL23cz/uL23cy (rpl23-A) from Nandina domestica (Heavenly bamboo).